The following is a 469-amino-acid chain: MTTHKDLIDRDRKVTFHASTHLRDFAHGDAPGRVITGGKGIKIVDKDGREFIDGFAGLYCVNIGYGRSEVAEAIYQQALEMSYYHTYVGHSNEPQIALSEKILELAGPGMSKVYYGMSGSDANETQLKIVRYYNNVLGRPQKKKVISRMRGYHGSGIASGSLTGLKAFHDHFDLPIETIRHTEAPYYYHRAAEQEGMTEREFSKHCAAKLEEMILAEGPDTVAAFIGEPVLGTGGIVPPPEGYWDEIQAVLTKYDVLLIADEVVCGFGRTGSDFGSHHYGIKPDLITIAKGLTSAYQPLSGVIVGDRVWEVLEQGTGEYGPIGHGWTYSGHALGCAAGLANLAIIEREGLTANAAETGAYLQERMKAAFADHPVVGQVRGVGMMAALEFSVDPAARRHFDPSLKVGPRMSAAALEEDLIARAMPQGDILGFAPPLTTTREEVDEIVARTERAVNKVTDALTREGAIQAA.

K290 is modified (N6-(pyridoxal phosphate)lysine).

This sequence belongs to the class-III pyridoxal-phosphate-dependent aminotransferase family. Pyridoxal 5'-phosphate serves as cofactor.

Its subcellular location is the cytoplasm. The catalysed reaction is L-2,4-diaminobutanoate + 2-oxoglutarate = L-aspartate 4-semialdehyde + L-glutamate. In terms of biological role, involved in the degradation of ectoine, which allows H.elongata to utilize ectoine as both a carbon and a nitrogen source for growth. Probably catalyzes the conversion of L-2,4-diaminobutyrate (DABA) to L-aspartate beta-semialdehyde (ASA) by transamination with 2-oxoglutarate. The protein is Diaminobutyrate--2-oxoglutarate transaminase of Halomonas elongata (strain ATCC 33173 / DSM 2581 / NBRC 15536 / NCIMB 2198 / 1H9).